The sequence spans 250 residues: Petrobactin import ATP-binding protein FatE (250 aa).

One can recognise an ABC transporter domain in the interval 2 to 236 (IKIDNVKKFY…TLLTDIFETR (235 aa)). 34-41 (GPNGAGKS) serves as a coordination point for ATP.

This sequence belongs to the ABC transporter superfamily. In terms of assembly, the complex is composed of two ATP-binding proteins (FatE), two transmembrane proteins (FatC and FatD) and a solute-binding protein (FpuA).

The protein localises to the cell membrane. The catalysed reaction is a Fe(III)-siderophore(out) + ATP + H2O = a Fe(III)-siderophore(in) + ADP + phosphate + H(+). Its function is as follows. Part of an ABC transporter complex involved in ferric-petrobactin uptake. Probably responsible for energy coupling to the transport system. This chain is Petrobactin import ATP-binding protein FatE, found in Bacillus anthracis.